A 258-amino-acid polypeptide reads, in one-letter code: Casein kinase II subunit beta' (258 aa).

Over residues 1–10 (MGSRSENVGT) the composition is skewed to polar residues. The tract at residues 1–29 (MGSRSENVGTVTREGSRVEQDDVLMDDDS) is disordered.

This sequence belongs to the casein kinase 2 subunit beta family. As to quaternary structure, tetramer composed of an alpha subunit, an alpha' subunit, one beta subunit and one beta' subunit. Interacts with FACT subunits POB3 and SPT16. Interaction with YTA7. In terms of processing, phosphorylated by alpha subunit. The N-terminus is blocked.

Functionally, regulatory subunit of casein kinase II/CK2. As part of the kinase complex regulates the basal catalytic activity of the alpha subunit a constitutively active serine/threonine-protein kinase that phosphorylates a large number of substrates containing acidic residues C-terminal to the phosphorylated serine or threonine. This is Casein kinase II subunit beta' from Saccharomyces cerevisiae (strain ATCC 204508 / S288c) (Baker's yeast).